We begin with the raw amino-acid sequence, 123 residues long: U9-barytoxin-Tl1a (123 aa).

The signal sequence occupies residues 1–18; sequence MNTMITFLVLFVLTAANG. Residues 19–77 constitute a propeptide that is removed on maturation; sequence APEANERKIPEAIHNEDQSLAEMAEELMFFLQQTEFEAPLLQEEEEAEXAEXRNSRERR. 3 disulfides stabilise this stretch: cysteine 78–cysteine 93, cysteine 85–cysteine 98, and cysteine 92–cysteine 112.

It belongs to the neurotoxin 14 (magi-1) family. 05 (ICK-7) subfamily. ICK-7 sub-subfamily. Expressed by the venom gland.

It is found in the secreted. Its function is as follows. Ion channel inhibitor. The chain is U9-barytoxin-Tl1a from Trittame loki (Brush-footed trapdoor spider).